Here is a 197-residue protein sequence, read N- to C-terminus: Isochorismatase domain-containing protein 2 (197 aa).

It belongs to the isochorismatase family.

The sequence is that of Isochorismatase domain-containing protein 2 (isoc2) from Danio rerio (Zebrafish).